A 219-amino-acid polypeptide reads, in one-letter code: Orotate phosphoribosyltransferase (219 aa).

Lys-26 contributes to the 5-phospho-alpha-D-ribose 1-diphosphate binding site. Phe-34–Phe-35 is a binding site for orotate. 5-phospho-alpha-D-ribose 1-diphosphate is bound by residues Tyr-72–Lys-73, Arg-98, Lys-99, Lys-102, His-104, and Asp-124–Ala-132. Thr-128 and Arg-156 together coordinate orotate.

This sequence belongs to the purine/pyrimidine phosphoribosyltransferase family. PyrE subfamily. As to quaternary structure, homodimer. Mg(2+) is required as a cofactor.

It catalyses the reaction orotidine 5'-phosphate + diphosphate = orotate + 5-phospho-alpha-D-ribose 1-diphosphate. It participates in pyrimidine metabolism; UMP biosynthesis via de novo pathway; UMP from orotate: step 1/2. Catalyzes the transfer of a ribosyl phosphate group from 5-phosphoribose 1-diphosphate to orotate, leading to the formation of orotidine monophosphate (OMP). This is Orotate phosphoribosyltransferase from Xylella fastidiosa (strain 9a5c).